The primary structure comprises 154 residues: Peptide methionine sulfoxide reductase MsrB (154 aa).

The region spanning 28-150 is the MsrB domain; that stretch reads DQQWREQLSE…NSVSLIFNKI (123 aa). Positions 67, 70, 116, and 119 each coordinate Zn(2+). The active-site Nucleophile is cysteine 139.

Belongs to the MsrB Met sulfoxide reductase family. It depends on Zn(2+) as a cofactor.

The catalysed reaction is L-methionyl-[protein] + [thioredoxin]-disulfide + H2O = L-methionyl-(R)-S-oxide-[protein] + [thioredoxin]-dithiol. The sequence is that of Peptide methionine sulfoxide reductase MsrB from Vibrio vulnificus (strain CMCP6).